A 381-amino-acid chain; its full sequence is Phthiodiolone/phenolphthiodiolone dimycocerosates ketoreductase (381 aa).

It belongs to the mer family. Phthiodiolone/phenolphthiodiolone dimycocerosates ketoreductase subfamily.

Its function is as follows. Catalyzes the reduction of the keto moiety of phthiodiolone dimycocerosates (DIM B) and glycosylated phenolphthiodiolone dimycocerosates to form the intermediate compounds phthiotriol and glycosylated phenolphthiotriol dimycocerosates during phthiocerol dimycocerosates (DIM A) and glycosylated phenolphthiocerol dimycocerosates (PGL) biosynthesis. In Mycobacterium bovis (strain ATCC BAA-935 / AF2122/97), this protein is Phthiodiolone/phenolphthiodiolone dimycocerosates ketoreductase.